A 152-amino-acid polypeptide reads, in one-letter code: Transcriptional repressor NrdR (152 aa).

Residues 3 to 34 fold into a zinc finger; it reads CPYCQHPDSDVIDTRKLHNGETIRRRRKCEAC. The 91-residue stretch at 49 to 139 folds into the ATP-cone domain; that stretch reads ITVVKKNGER…VYRSFADIGK (91 aa).

This sequence belongs to the NrdR family. Zn(2+) serves as cofactor.

Its function is as follows. Negatively regulates transcription of bacterial ribonucleotide reductase nrd genes and operons by binding to NrdR-boxes. This chain is Transcriptional repressor NrdR, found in Roseiflexus sp. (strain RS-1).